Here is a 229-residue protein sequence, read N- to C-terminus: Non-structural protein V (229 aa).

Positions 28-115 are disordered; that stretch reads LGATSQPPPN…DTQSPSPSKT (88 aa). Residues 45–55 show a composition bias toward basic and acidic residues; it reads KTEENNDETRT. Positions 59-71 are enriched in low complexity; sequence SASAEAPAHASSP. Polar residues-rich tracts occupy residues 82–97 and 105–115; these read GKQS…NRPQ and SDTQSPSPSKT. 8 residues coordinate Zn(2+): His178, Cys197, Cys201, Cys213, Cys215, Cys218, Cys222, and Cys225.

The protein belongs to the paramyxoviruses V protein family.

Its function is as follows. Blocks host interferon signaling. This chain is Non-structural protein V (P/V), found in Human parainfluenza 4b virus (strain 68-333) (HPIV-4b).